The following is a 618-amino-acid chain: MSNVLLSKLSSELADLDGQVSQIDQQISQLRRKKAELIQKKQALERKIEMKTNEDSDVVLDRWDQDSFPWSDEANQILKNKFRLEKFRPLQSAAINAVMSKEDAIVILSTGGGKSLCYQLPALLAKGLTLVISPLVSLVEDQIMQLQKLGIDAASLNANTPKDEAKRVEQAITKGSTELRLLYVTPEKLAKSKRMMNQLEKSLGVGYLKLIAIDEVHCCSQWGHDFRTDYSFLNVLKRQFKGVPILGLTATATSNVLDDVKKMLGIPVAIVFRAGFNRANLNYKVLTKPGSEDECVEKIVRTIKRKFSGKTGIIYCLSRNDCEKLAKSLKANGIRAKHYHAYMEPVDRSAAHQKWVSGEIQVIVATVAFGMGIDKPDVRFVIHHSLPKSIENYYQESGRAGRDGLPATCILYYRMSDIFKQSSMIQQEQTGIANLYNMVRYASDTVTCRRVKLAEHFEEAWEPSWCQKQCDVCEKSSNSPGTATEDVSKEAVVVINIIEENLSSAKDGSGRITGNKLLDLLSKKLKGRRTKDFCEKLIVHLLLESYLQEDFHYTVYSVISYVVVGLKWRVYNRKDEIPMTLDNTKKGRAEENNRKRKAAVTSSDEEVDVGDDDDVITL.

Residues 95-270 form the Helicase ATP-binding domain; sequence INAVMSKEDA…KKMLGIPVAI (176 aa). 108–115 contributes to the ATP binding site; the sequence is LSTGGGKS. The short motif at 214 to 217 is the DEVH box element; sequence DEVH. The Helicase C-terminal domain maps to 295–443; it reads CVEKIVRTIK…NLYNMVRYAS (149 aa). Zn(2+) is bound by residues C448, C466, C470, and C473. The interval 586–618 is disordered; sequence KGRAEENNRKRKAAVTSSDEEVDVGDDDDVITL. The span at 603-618 shows a compositional bias: acidic residues; sequence SDEEVDVGDDDDVITL.

Belongs to the helicase family. RecQ subfamily. Zn(2+) serves as cofactor.

The protein resides in the nucleus. It catalyses the reaction Couples ATP hydrolysis with the unwinding of duplex DNA by translocating in the 3'-5' direction.. It carries out the reaction ATP + H2O = ADP + phosphate + H(+). Its function is as follows. DNA helicase that may play a role in the repair of DNA that is damaged by ultraviolet light or other mutagens. Exhibits a magnesium-dependent ATP-dependent DNA-helicase activity that unwinds single- and double-stranded DNA in a 3'-5' direction. This chain is Putative ATP-dependent DNA helicase Q1, found in Caenorhabditis briggsae.